The following is a 1705-amino-acid chain: Intersectin-1 (1705 aa).

EH domains follow at residues 21–109 (ERAK…PVAM) and 220–309 (SRLK…SFRR). EF-hand domains lie at 53-88 (LPQP…IKLK) and 253-288 (LPQS…IDVA). Ca(2+) is bound by residues aspartate 66, asparagine 68, aspartate 70, arginine 72, glutamate 77, aspartate 266, aspartate 268, aspartate 270, lysine 272, and glutamate 277. Disordered regions lie at residues 322-355 (VSVD…KREN), 386-433 (RAEQ…ERRE), and 668-708 (RYKF…PPEP). A KLERQ region spans residues 325-697 (DQRLPEEPEE…VEKKPEIQEK (373 aa)). A compositionally biased stretch (basic and acidic residues) spans 339-355 (NADKKLPVTFEDKKREN). The stretch at 350–687 (DKKRENFERG…KREESIQKCE (338 aa)) forms a coiled coil. Positions 668–699 (RYKFQDEEKEKREESIQKCEVEKKPEIQEKPN) are enriched in basic and acidic residues. Residues 732 to 793 (VKVVYYRALY…PANYAERMPE (62 aa)) enclose the SH3 1 domain. Positions 823–833 (AFTNTSTNSNN) are enriched in low complexity. The interval 823–851 (AFTNTSTNSNNWADFSSTWPTNNTDKVES) is disordered. The segment covering 834–846 (WADFSSTWPTNNT) has biased composition (polar residues). The 59-residue stretch at 897–955 (VEGLQAQALYPWRAKKDNHLNFNKNDVITVLEQQDMWWFGEVQGQKGWFPKSYVKLISG) folds into the SH3 2 domain. Residues 959-978 (KSTSIDSTSSESPASLKRVS) form a disordered region. Low complexity predominate over residues 960–973 (STSIDSTSSESPAS). SH3 domains follow at residues 986-1044 (IQGE…PKDS), 1058-1122 (KKPE…LLSP), and 1139-1198 (PPTC…LTTD). The Bipartite nuclear localization signal; in isoform 2 motif lies at 1088 to 1111 (RKKNPGGWWEGELQARGKKRQIGW). The DH domain maps to 1221–1407 (KRQGYIHELI…EELCSQVNEG (187 aa)). A PH domain is found at 1446 to 1555 (KFLHSGKLYK…WVQKIKAASE (110 aa)). The 117-residue stretch at 1563–1679 (KKREKAYLVR…KKDQGSKGPV (117 aa)) folds into the C2 domain. The Ca(2+) site is built by aspartate 1651, serine 1654, and aspartate 1657.

Binds epn1 and epn2. Requires Ca(2+) as cofactor.

Its subcellular location is the endomembrane system. It is found in the synapse. It localises to the synaptosome. The protein localises to the cell projection. The protein resides in the lamellipodium. Its subcellular location is the cell membrane. It is found in the membrane. It localises to the clathrin-coated pit. The protein localises to the recycling endosome. The protein resides in the cytoplasm. Its subcellular location is the nucleus envelope. Functionally, adapter protein that provides a link between the endocytic membrane traffic and the actin assembly machinery. Acts as a guanine nucleotide exchange factor (GEF) for cdc42, and thereby stimulates actin nucleation mediated by wasl and the arp2/3 complex. Involved in endocytosis of activated egfr, and probably also other growth factor receptors. The sequence is that of Intersectin-1 (itsn1) from Xenopus laevis (African clawed frog).